The following is a 299-amino-acid chain: Probable lipid kinase YegS (299 aa).

The 132-residue stretch at 2 to 133 (ANFPASLLIL…IDMARVNDKT (132 aa)) folds into the DAGKc domain. ATP is bound by residues T40, 66–72 (GDGTINE), and T95. L215, D218, and L220 together coordinate Mg(2+). E271 serves as the catalytic Proton acceptor.

The protein belongs to the diacylglycerol/lipid kinase family. YegS lipid kinase subfamily. Mg(2+) is required as a cofactor. Ca(2+) serves as cofactor.

It is found in the cytoplasm. Its function is as follows. Probably phosphorylates lipids; the in vivo substrate is unknown. This Salmonella gallinarum (strain 287/91 / NCTC 13346) protein is Probable lipid kinase YegS.